The sequence spans 178 residues: DNA-directed RNA polymerase V subunit 7 (178 aa).

This sequence belongs to the eukaryotic RPB7/RPC8 RNA polymerase subunit family. Component of the RNA polymerase V complex.

The protein resides in the nucleus. In terms of biological role, DNA-dependent RNA polymerase catalyzes the transcription of DNA into RNA using the four ribonucleoside triphosphates as substrates. Component of RNA polymerase V involved in RNA-directed DNA methylation-dependent (RdDM) silencing of endogenous repeated sequences, including transposable elements. The sequence is that of DNA-directed RNA polymerase V subunit 7 (NRPE7) from Arabidopsis thaliana (Mouse-ear cress).